Reading from the N-terminus, the 348-residue chain is Isopentenyl-diphosphate delta-isomerase (348 aa).

Substrate is bound at residue 14 to 15; that stretch reads RK. FMN contacts are provided by residues Ser72, 73 to 75, Ser103, and Asn131; that span reads SMT. 103-105 contributes to the substrate binding site; it reads SQR. Substrate is bound at residue Gln166. Glu167 lines the Mg(2+) pocket. FMN is bound by residues Lys198, Thr228, 278–280, and 299–300; these read GIR and AR.

It belongs to the IPP isomerase type 2 family. In terms of assembly, homooctamer. Dimer of tetramers. FMN is required as a cofactor. Requires NADPH as cofactor. It depends on Mg(2+) as a cofactor.

It localises to the cytoplasm. It catalyses the reaction isopentenyl diphosphate = dimethylallyl diphosphate. Involved in the biosynthesis of isoprenoids. Catalyzes the 1,3-allylic rearrangement of the homoallylic substrate isopentenyl (IPP) to its allylic isomer, dimethylallyl diphosphate (DMAPP). In Synechococcus sp. (strain ATCC 27144 / PCC 6301 / SAUG 1402/1) (Anacystis nidulans), this protein is Isopentenyl-diphosphate delta-isomerase.